The following is a 256-amino-acid chain: Signal peptidase I (256 aa).

Active-site residues include Ser-32 and Lys-75.

It belongs to the peptidase S26 family.

It carries out the reaction Cleavage of hydrophobic, N-terminal signal or leader sequences from secreted and periplasmic proteins.. The protein is Signal peptidase I (lepB) of Aquifex aeolicus (strain VF5).